A 443-amino-acid chain; its full sequence is Xaa-Pro dipeptidase (443 aa).

Residues D244, D255, H339, E384, and E423 each coordinate Mn(2+).

The protein belongs to the peptidase M24B family. Bacterial-type prolidase subfamily. Mn(2+) is required as a cofactor.

The catalysed reaction is Xaa-L-Pro dipeptide + H2O = an L-alpha-amino acid + L-proline. In terms of biological role, splits dipeptides with a prolyl residue in the C-terminal position. This chain is Xaa-Pro dipeptidase, found in Pseudoalteromonas atlantica (strain T6c / ATCC BAA-1087).